The chain runs to 329 residues: GTPase Obg (329 aa).

Residues 1–159 (MQFIDEAKIF…MWVWLHLKLL (159 aa)) form the Obg domain. Residues 160–327 (SDVGLVGLPN…LLANILSELQ (168 aa)) form the OBG-type G domain. GTP is bound by residues 166–173 (GLPNAGKS), 191–195 (FTTLT), 212–215 (DIPG), 279–282 (TKTD), and 308–310 (SSY). 2 residues coordinate Mg(2+): S173 and T193.

It belongs to the TRAFAC class OBG-HflX-like GTPase superfamily. OBG GTPase family. As to quaternary structure, monomer. Mg(2+) is required as a cofactor.

Its subcellular location is the cytoplasm. In terms of biological role, an essential GTPase which binds GTP, GDP and possibly (p)ppGpp with moderate affinity, with high nucleotide exchange rates and a fairly low GTP hydrolysis rate. Plays a role in control of the cell cycle, stress response, ribosome biogenesis and in those bacteria that undergo differentiation, in morphogenesis control. This is GTPase Obg from Orientia tsutsugamushi (strain Boryong) (Rickettsia tsutsugamushi).